We begin with the raw amino-acid sequence, 276 residues long: Type II pantothenate kinase (276 aa).

An ATP-binding site is contributed by 8 to 15 (DAGGTLTK). Catalysis depends on Glu-76, which acts as the Proton acceptor. Residues Thr-105, 127–131 (GGTIM), Phe-143, and Ser-230 each bind ATP.

It belongs to the type II pantothenate kinase family. In terms of assembly, homodimer.

The protein resides in the cytoplasm. It carries out the reaction (R)-pantothenate + ATP = (R)-4'-phosphopantothenate + ADP + H(+). It participates in cofactor biosynthesis; coenzyme A biosynthesis; CoA from (R)-pantothenate: step 1/5. Its function is as follows. Catalyzes the phosphorylation of pantothenate (Pan), the first step in CoA biosynthesis. The polypeptide is Type II pantothenate kinase (Bacillus cereus (strain ATCC 10987 / NRS 248)).